Consider the following 3187-residue polypeptide: MNTQKGSLTINVHRGSLAMSIQRGSLVPRDMDSSGRDMQLRVIPAEVKFLDTMAGRVYRLPITVHNICRWNQKIRFKEPVKPQFKLMLTSLDKELASGLQMTAMVEYHPDKDEDTFDRLLISIENKTTEIPLIGLIPSCQLEIESVVNFGTLVANSKVYSKEITITNHGKAPGIFKAEYHGQLPILIFPTSGIVDAKSSMVIKVDFCADQPRIVDEEAIVILQGQPEMLLSIKAHVVEQIIELLSMSSDRRLECIHFGPVFFGSSKIKHARVYNNSPEPINWVAIIQDDAVGEELGTDIQQRTDIALNNLTYIRKIKNIDTTIIISCLPNEGTLQPYQKTVITFCFTPKLMAVGKKDIGPSYRQDYALFLRFESVGSKDGFLRDDDYKTIKSERFQKVELALTGTGLPVLLQFDPGPVLNFKPCFMGERSEIQCIIKNQCELLPVTYHFKKTANFEIDPEKGKITGGGMVDVMCSFVPHQLGVFKVKQMIEIIGLVAEEDLQSLSVKSFHHVYLAFNSICKASTKKVVMKFDPGILPSIRNPTGKFVVKDLAKRKNYAPVAMLQSAMTRTHNHRSCEEPVKDMLLAFPNDRAATIRSKDHHKHFRPIFTKVPRFNYVNHDFAYTTFEKQQKKLHENYYAMYLKYLRSVRLQKKQAERERMYSYDDTDIGLEPGSGLKSPSLSEAEIEEELSSAANSIRANRLLTTRGIASQEEESVRRKVLKGLKSEPSTPQEKHDCSLMLTPKQIHQVIVGPSVLNFGNICVNSPNTHLLHVINMLPMHVLLQLDTDLEELQKTNQFSYVILPTSSTYISMVFDSPTIGKFWKSFTFTVNNVPSGHILVVAVVQPVTLELSSNELVLRPRGFFMKTCFRGTVRLYNRQNCCAQFQWQPVNTGRGIAFSICPAKGTVEAYSSLECEVTWQQGFSSPEEGEFILHVFQGNALKLKCVAHLGRTKVLLLQPRILFSNCPQGLTTWRKAILQNVGQNHAYFKVCSQSLLPIINIIPSQGIVPFGGITVLNISCKPTVAEKFDTRAKVSIRHANVIDLRIGGSAEIADVEINPDVFNFSGAYIGGTQIIPFVIKNKGITRARVEFNLKDFPDFSMDLKDKSEEFKDPAVPYIYSLELEENTSLECSITFSPKEVTVVEFIIQVQINFFESSKLYTKYLSSSPSNPKTVPLIRPCYVQATALQSPLNLSSTKFVFEIPLHEMNPNNKVTKTQNLVLYNITKHHVTWTLDLSNTGKLFKDGTFKFSVLNGILRPNEKYNVSISFCPNRPGTYTADIPMLLNYIPVCYKILHLTGEVKSPELLFDPPFIFFTPVPLDITTVMDINILPQNYFRNSTLCVQIPTVRLLDGEEIHPLSVKFPKGRVIPGSHSGINNKLTCHLSFKSSKPVSFFTNLLFCDDRKNWFSLPVTATAENCILTIYPYMAIHLDKQNIILKNDKDEYLKKTRDGVLPPYQDAKPPSPASIKKTYTTSKFNDAEPAKGNLFIGVEVLPENLHLDESETSEEDHGSLEKEKYEQFLSLEEGTKAHYFFEKVVNAAQTWFSLFGWPEGPHSFSIPETIRRDVYKMQFYSSTSPPQKFSRQNDFSKYNKTIYDVLLHLSGKMPPGINSSQSLPVDNHEKRVIQLHLQHSSLLDFLNAQGGCISHVLPEFLLEPEDYKRWIEIMSSTNTMPVSSCTPKKKCSIVIEMSKFEAWSKRAWTDVFLQIYKVLVLSRVVPYCSNNMPPICVQNTPKVNPCFASSNIYSDSERILLSWMNINYENTRHVIWKNCHKDVIPSERWIVNFDKDLSDGLVFATQLGAYCPFLIESHFINMYTRPKSPEEYLHNCLIIVNTLYEIDFDVEIQATDICDPNPILMLMLCVYMYERLPTYLPKKVVSFECTLHDTVLNKILLKNSSSRNLVYNARIVGRDAADFSLSQKGNVVTISPRNEINVTLKFTSRFIRPAEASLLLISKPKNAVRGITMTFALKGKVLDFKAIDIIKCESPCYQFQEVTVNVKNPFHTAGDFSVILVESSTFVSSPTKLTESRQYPKHDDDMSSSGSDTDQGCSDSPNVLHTSIKSTFIREFFCSMHTVHLGVKGTSSLELRFLPFNMHVRYCVIILSNKKIGQLIYVAEGKGMTPLPSSCLPMNTSSSPVYYSTTREEGPNKKYPVLYLKCKPYQILYVDLKLPMTNEAKEKALAFAAQQQMSSIEYERRLITGTLESSSIRVAIALLGLTKIETLMLFRISKLRKPKTVSYTTEVSLPKYFYIPEKISIPWIPEPQVIKLSKAKASDGSVPLPLQFLPLQSGRYPCKILLKSRYDVRAYYVEGIVNEEQPEAKFEFETPAFEALTQNIPIKNQTNDKWTFQVTIEGEWFYGPVDLHVGPDEIVEYPLTFKPIFECVITGKLILQNEVDGREHIFDIKGVGKKPSALEHITVECQVGNVTQKHITLPHFTNTALTFKVTADLPIVWGNPQITVYPYKEILYLIHVRPWKRGILKGTITFSTTRRCTTRRKHDDYEEDTDQDQALSCLDSITEQSSILDDADTYGNFNNLRFWYNLEIHSTPGPPIEIMEMTCIALDSTCIEIPLSNPKDRGLHLEVQLTSAALNGDNEIILSPLQCTKYIVWYSPATTGYSDESIIFQPEMAEEFWYLLKLTIELPKPTTMPEIQCDLGKHVTQIIPLVNCTHETLKLQVTNSNPENFVLDINRKSQLIISPHSTTELPVLFYPSALGRADHQACINFYCTQFTEWKFYLSGVGLFPQPLDTERITTRIGLQSTIVIPFKNPTMEDVLIDIILTSVEHPRNLVMDHCWDSFIYESSAFRFSSPSEIQGIALPPKGNIDISLLFIPQIMKLHKTMVIIEMTKANGKYWPIDNFDELDIKFKSIVGIDSEEIQAIHWIYPIVGLPQAPPPKSPPVVIQCQSRKRAEEKVEIILNAGFFGFSLTPDLTEVLVIPKRNSHNFCEDPNEIPKIHEFEYEIQFESEAMKSKLESCVALYMIEKSYDIMAKRITFIFNLVFTPKKPLRSHITLKIECVTEGIWKFPIMLIATEPDTDAVIDIEGVGLFKESVFELRLKSQTRNPEPFTAHFLPGSDLEFFVKPQAGELLPFNTNGTLITVGFKPKMYCRKYKATLVIQTEEMYWKYEINGLTPTTVPPKNAKAKIDATHKTHDNMPVRPHNFVRENTKLIRTGVSSTIKGAPLVKNQ.

The 124-residue stretch at 1746–1869 folds into the Calponin-homology (CH) domain; that stretch reads SDSERILLSW…LCVYMYERLP (124 aa). The interval 2024-2052 is disordered; sequence KLTESRQYPKHDDDMSSSGSDTDQGCSDS. Basic and acidic residues predominate over residues 2026–2037; the sequence is TESRQYPKHDDD.

Interacts with CFAP65. In terms of tissue distribution, highly expressed in spermatzoa (at protein level).

The protein resides in the cytoplasm. It is found in the cytoskeleton. Its subcellular location is the flagellum basal body. Plays a role in flagellar formation and sperm motility. The protein is Cilia- and flagella-associated protein 47 of Homo sapiens (Human).